The chain runs to 859 residues: DNA mismatch repair protein MutS (859 aa).

Residue 617–624 (GPNMGGKS) coordinates ATP.

Belongs to the DNA mismatch repair MutS family.

Functionally, this protein is involved in the repair of mismatches in DNA. It is possible that it carries out the mismatch recognition step. This protein has a weak ATPase activity. The polypeptide is DNA mismatch repair protein MutS (Stutzerimonas stutzeri (strain A1501) (Pseudomonas stutzeri)).